The following is a 1479-amino-acid chain: Chromosome partition protein MukB (1479 aa).

34–41 (GGNGAGKS) provides a ligand contact to ATP. 2 coiled-coil regions span residues 138 to 163 (ETLN…MEGV) and 331 to 664 (QAAS…RLSQ). Residues 665–782 (PGGSEDPRLN…ALPLFGRAAR (118 aa)) are flexible hinge. Coiled-coil stretches lie at residues 831–1112 (DDPE…TAKA) and 1206–1257 (VEAI…MLNQ).

It belongs to the SMC family. MukB subfamily. Homodimerization via its hinge domain. Binds to DNA via its C-terminal region. Interacts, and probably forms a ternary complex, with MukE and MukF via its C-terminal region. The complex formation is stimulated by calcium or magnesium. Interacts with tubulin-related protein FtsZ.

Its subcellular location is the cytoplasm. It localises to the nucleoid. Functionally, plays a central role in chromosome condensation, segregation and cell cycle progression. Functions as a homodimer, which is essential for chromosome partition. Involved in negative DNA supercoiling in vivo, and by this means organize and compact chromosomes. May achieve or facilitate chromosome segregation by condensation DNA from both sides of a centrally located replisome during cell division. The sequence is that of Chromosome partition protein MukB from Klebsiella pneumoniae.